Consider the following 193-residue polypeptide: MAVPASPQHPRGYGILLLTLLLKALATTASACNHLRPQDATFSHDSLQLFRDMAPTLLQLCPQHNASCSFNDTILDTSNTRQADKTTHDILQHLFKILSSPSTPAHWNDSQRQSLLNRIHRYTQHLEQCLDSSDTRSRTRWPRNLHLTIKKHFSCLHTFLQDNDYSACAWEHVRLQARAWFLHIHNLTGNTRT.

An N-terminal signal peptide occupies residues 1 to 31; it reads MAVPASPQHPRGYGILLLTLLLKALATTASA. 3 cysteine pairs are disulfide-bonded: cysteine 32–cysteine 129, cysteine 61–cysteine 155, and cysteine 68–cysteine 168. Residues asparagine 65, asparagine 71, asparagine 108, and asparagine 186 are each glycosylated (N-linked (GlcNAc...) asparagine).

The protein belongs to the alpha/beta interferon family.

It is found in the secreted. In terms of biological role, has antiviral activities. This chain is Interferon type A3 (IFNA3), found in Gallus gallus (Chicken).